The following is a 198-amino-acid chain: NAD(P)H dehydrogenase (quinone) (198 aa).

The region spanning 6-190 (ILVLYYSRHG…LCRALGKRLA (185 aa)) is the Flavodoxin-like domain. FMN-binding positions include 12–17 (SRHGAT), 79–81 (TRF), 114–120 (STASLHG), and His135.

This sequence belongs to the WrbA family. Homodimer. It depends on FMN as a cofactor.

The enzyme catalyses a quinone + NADH + H(+) = a quinol + NAD(+). It carries out the reaction a quinone + NADPH + H(+) = a quinol + NADP(+). The sequence is that of NAD(P)H dehydrogenase (quinone) from Pseudomonas aeruginosa (strain ATCC 15692 / DSM 22644 / CIP 104116 / JCM 14847 / LMG 12228 / 1C / PRS 101 / PAO1).